We begin with the raw amino-acid sequence, 318 residues long: Sol locus transcriptional repressor (318 aa).

4 TPR repeats span residues 65–98 (ANAY…RPKT), 99–132 (INDV…QPNV), 133–166 (GISY…GSTN), and 167–199 (SVYR…EPEK).

Its function is as follows. Transcriptional repressor of the sol locus (adhE/aad, ctfA, ctfB and adc) genes for butanol and acetone formation. The protein is Sol locus transcriptional repressor (solR) of Clostridium acetobutylicum (strain ATCC 824 / DSM 792 / JCM 1419 / IAM 19013 / LMG 5710 / NBRC 13948 / NRRL B-527 / VKM B-1787 / 2291 / W).